A 325-amino-acid chain; its full sequence is Probable flavonol synthase 5 (325 aa).

The disordered stretch occupies residues 1–21 (MEEERDHNASESSLPSLSKQL). Positions 10–21 (SESSLPSLSKQL) are enriched in polar residues. Residues 180 to 280 (TAEYVLRVNF…RISWPVFVAP (101 aa)) enclose the Fe2OG dioxygenase domain. 188–190 (NFY) lines the 2-oxoglutarate pocket. Fe cation contacts are provided by H205, D207, and H261. A 2-oxoglutarate-binding site is contributed by 271–273 (RIS).

The protein belongs to the iron/ascorbate-dependent oxidoreductase family. Fe(2+) is required as a cofactor. In terms of tissue distribution, expressed in young seedlings.

The enzyme catalyses a (2R,3R)-dihydroflavonol + 2-oxoglutarate + O2 = a flavonol + succinate + CO2 + H2O. The protein operates within secondary metabolite biosynthesis; flavonoid biosynthesis. The chain is Probable flavonol synthase 5 (FLS5) from Arabidopsis thaliana (Mouse-ear cress).